The following is a 229-amino-acid chain: Histone H1 (229 aa).

Disordered regions lie at residues 1-52 (MADT…SSHP) and 125-229 (APAL…RTRK). The span at 32-45 (KEKKKVIAAKKPKS) shows a compositional bias: basic residues. The H15 domain occupies 50-119 (SHPSFFEMIS…KVKNSFKLPS (70 aa)). Residues 125-138 (APALAKKPTIPKPK) are compositionally biased toward low complexity. Over residues 139–160 (VAAKPKTAKIGAKPKAKAKVAA) the composition is skewed to basic residues. Composition is skewed to low complexity over residues 161-177 (KTKA…PAAK) and 185-205 (KPKT…VASP). A compositionally biased stretch (basic residues) spans 206-229 (GKKKAVPVKKVKTVKSPAGKRTRK).

Belongs to the histone H1/H5 family.

The protein localises to the nucleus. It localises to the chromosome. In terms of biological role, histones H1 are necessary for the condensation of nucleosome chains into higher-order structures. This chain is Histone H1, found in Euphorbia esula (Leafy spurge).